The sequence spans 937 residues: AP-2 complex subunit beta (937 aa).

Thr2 is modified (N-acetylthreonine). Ser4 is modified (phosphoserine). Position 265 is an N6-acetyllysine (Lys265). 2 positions are modified to phosphotyrosine: Tyr737 and Tyr928.

Belongs to the adaptor complexes large subunit family. As to quaternary structure, adapter protein complex 2 (AP-2) is a heterotetramer composed of two large adaptins (alpha-type subunit AP2A1 or AP2A2 and beta-type subunit AP2B1), a medium adaptin (mu-type subunit AP2M1) and a small adaptin (sigma-type subunit AP2S1). Interacts with EPN1. Interacts with EPS15; clathrin competes with EPS15. Interacts with SNAP91; clathrin competes with SNAP91. Interacts with CLTC; clathrin competes with EPS15, SNAP91 and PIP5K1C. Interacts with LDLRAP1. Interacts with AMPH and BIN1. Interacts with ARF6 (GDP-bound). Interacts (dephosphorylated at Tyr-737) with ARRB1; phosphorylation of AP2B1 at Tyr-737 disrupts the interaction. Interacts with SLC2A8. Interacts with SCYL1 and SCYL2. Interacts with TGFBR1 and TGFBR2. Interacts with PIP5K1C; clathrin competes with PIP5K1C. Interacts with DENND1B. Interacts with FCHO1. Interacts with RFTN1. Interacts with KIAA1107. Together with AP2A1 or AP2A2 and AP2M1, it interacts with ADAM10; this interaction facilitates ADAM10 endocytosis from the plasma membrane during long-term potentiation in hippocampal neurons. Post-translationally, the N-terminus is blocked. Phosphorylation at Tyr-737 by SRC occurs at the plasma membrane in clathrin-coated vesicles (CCVs).

Its subcellular location is the cell membrane. It is found in the membrane. The protein resides in the coated pit. Component of the adaptor protein complex 2 (AP-2). Adaptor protein complexes function in protein transport via transport vesicles in different membrane traffic pathways. Adaptor protein complexes are vesicle coat components and appear to be involved in cargo selection and vesicle formation. AP-2 is involved in clathrin-dependent endocytosis in which cargo proteins are incorporated into vesicles surrounded by clathrin (clathrin-coated vesicles, CCVs) which are destined for fusion with the early endosome. The clathrin lattice serves as a mechanical scaffold but is itself unable to bind directly to membrane components. Clathrin-associated adaptor protein (AP) complexes which can bind directly to both the clathrin lattice and to the lipid and protein components of membranes are considered to be the major clathrin adaptors contributing the CCV formation. AP-2 also serves as a cargo receptor to selectively sort the membrane proteins involved in receptor-mediated endocytosis. AP-2 seems to play a role in the recycling of synaptic vesicle membranes from the presynaptic surface. AP-2 recognizes Y-X-X-[FILMV] (Y-X-X-Phi) and [ED]-X-X-X-L-[LI] endocytosis signal motifs within the cytosolic tails of transmembrane cargo molecules. AP-2 may also play a role in maintaining normal post-endocytic trafficking through the ARF6-regulated, non-clathrin pathway. During long-term potentiation in hippocampal neurons, AP-2 is responsible for the endocytosis of ADAM10. The AP-2 beta subunit acts via its C-terminal appendage domain as a scaffolding platform for endocytic accessory proteins; at least some clathrin-associated sorting proteins (CLASPs) are recognized by their [DE]-X(1,2)-F-X-X-[FL]-X-X-X-R motif. The AP-2 beta subunit binds to clathrin heavy chain, promoting clathrin lattice assembly; clathrin displaces at least some CLASPs from AP2B1 which probably then can be positioned for further coat assembly. This is AP-2 complex subunit beta (AP2B1) from Bos taurus (Bovine).